A 307-amino-acid chain; its full sequence is Small ribosomal subunit biogenesis GTPase RsgA (307 aa).

Positions 1–21 (MPSEHPFSDGIPTPNPKETMN) are disordered. Residues 85-242 (RQDAWKTKLI…LIDSPGLQEF (158 aa)) form the CP-type G domain. Residues 135–138 (NKAD) and 184–192 (GQSGMGKST) each bind GTP. 4 residues coordinate Zn(2+): cysteine 266, cysteine 271, histidine 273, and cysteine 279.

It belongs to the TRAFAC class YlqF/YawG GTPase family. RsgA subfamily. Monomer. Associates with 30S ribosomal subunit, binds 16S rRNA. Zn(2+) serves as cofactor.

The protein resides in the cytoplasm. One of several proteins that assist in the late maturation steps of the functional core of the 30S ribosomal subunit. Helps release RbfA from mature subunits. May play a role in the assembly of ribosomal proteins into the subunit. Circularly permuted GTPase that catalyzes slow GTP hydrolysis, GTPase activity is stimulated by the 30S ribosomal subunit. This chain is Small ribosomal subunit biogenesis GTPase RsgA, found in Neisseria meningitidis serogroup B (strain ATCC BAA-335 / MC58).